The following is a 426-amino-acid chain: Histidine--tRNA ligase (426 aa).

It belongs to the class-II aminoacyl-tRNA synthetase family. As to quaternary structure, homodimer.

Its subcellular location is the cytoplasm. It catalyses the reaction tRNA(His) + L-histidine + ATP = L-histidyl-tRNA(His) + AMP + diphosphate + H(+). This is Histidine--tRNA ligase from Streptococcus gordonii (strain Challis / ATCC 35105 / BCRC 15272 / CH1 / DL1 / V288).